The following is a 304-amino-acid chain: ATP phosphoribosyltransferase (304 aa).

This sequence belongs to the ATP phosphoribosyltransferase family. Long subfamily. The cofactor is Mg(2+).

The protein resides in the cytoplasm. It carries out the reaction 1-(5-phospho-beta-D-ribosyl)-ATP + diphosphate = 5-phospho-alpha-D-ribose 1-diphosphate + ATP. The protein operates within amino-acid biosynthesis; L-histidine biosynthesis; L-histidine from 5-phospho-alpha-D-ribose 1-diphosphate: step 1/9. With respect to regulation, feedback inhibited by histidine. Its function is as follows. Catalyzes the condensation of ATP and 5-phosphoribose 1-diphosphate to form N'-(5'-phosphoribosyl)-ATP (PR-ATP). Has a crucial role in the pathway because the rate of histidine biosynthesis seems to be controlled primarily by regulation of HisG enzymatic activity. This is ATP phosphoribosyltransferase from Xanthomonas campestris pv. campestris (strain B100).